The sequence spans 490 residues: Pleckstrin homology domain-containing family O member 2 (490 aa).

A PH domain is found at 18–119 (MVDKAGWIKK…WIKALNEGIN (102 aa)). A phosphoserine mark is found at serine 164 and serine 167. The segment at 173-402 (LDLDVPDSGP…DLLGEGPRHP (230 aa)) is disordered. Low complexity predominate over residues 230–243 (APTPVSASSEVSPE). Threonine 232 is modified (phosphothreonine). Serine 235, serine 237, and serine 238 each carry phosphoserine. Residues 244 to 257 (SQEDSETPAEEDSG) show a composition bias toward acidic residues. Serine 273 carries the phosphoserine modification. A compositionally biased stretch (low complexity) spans 277–297 (PSPQEAPAAESAEPSQAPCSE). Phosphothreonine occurs at positions 298 and 311. Serine 390 and serine 468 each carry phosphoserine. A coiled-coil region spans residues 439–481 (SAETLLSQAVEQLRQATQVLQEMRDLGELSQEAPGLREKRKEL).

The sequence is that of Pleckstrin homology domain-containing family O member 2 (PLEKHO2) from Homo sapiens (Human).